The sequence spans 147 residues: Deoxyuridine 5'-triphosphate nucleotidohydrolase (147 aa).

Residues 67–69 (RSG), Asn-80, and 84–86 (TID) each bind substrate.

It belongs to the dUTPase family. It depends on Mg(2+) as a cofactor.

It catalyses the reaction dUTP + H2O = dUMP + diphosphate + H(+). Its pathway is pyrimidine metabolism; dUMP biosynthesis; dUMP from dCTP (dUTP route): step 2/2. Its function is as follows. This enzyme is involved in nucleotide metabolism: it produces dUMP, the immediate precursor of thymidine nucleotides and it decreases the intracellular concentration of dUTP so that uracil cannot be incorporated into DNA. This is Deoxyuridine 5'-triphosphate nucleotidohydrolase from Anaplasma marginale (strain St. Maries).